Here is a 102-residue protein sequence, read N- to C-terminus: uncharacterized protein (102 aa).

The chain crosses the membrane as a helical span at residues F77 to L96.

It localises to the membrane. This is an uncharacterized protein from Saccharomyces cerevisiae (strain ATCC 204508 / S288c) (Baker's yeast).